Reading from the N-terminus, the 77-residue chain is Large ribosomal subunit protein bL31 (77 aa).

It belongs to the bacterial ribosomal protein bL31 family. Type A subfamily. As to quaternary structure, part of the 50S ribosomal subunit.

Binds the 23S rRNA. The polypeptide is Large ribosomal subunit protein bL31 (Paramagnetospirillum magneticum (strain ATCC 700264 / AMB-1) (Magnetospirillum magneticum)).